Here is a 380-residue protein sequence, read N- to C-terminus: Mitogen-activated protein kinase mpkC (380 aa).

One can recognise a Protein kinase domain in the interval 20-300; that stretch reads YVNLQPIGMG…AQDALRHPYL (281 aa). ATP is bound by residues 26–34 and Lys49; that span reads IGMGSFGLV. Asp141 acts as the Proton acceptor in catalysis. Thr171 carries the phosphothreonine modification. Positions 171–173 match the TXY motif; that stretch reads TGY. Position 173 is a phosphotyrosine (Tyr173).

Belongs to the protein kinase superfamily. Ser/Thr protein kinase family. MAP kinase subfamily. HOG1 sub-subfamily. The cofactor is Mg(2+). Post-translationally, dually phosphorylated on Thr-171 and Tyr-173, which activates the enzyme.

It carries out the reaction L-seryl-[protein] + ATP = O-phospho-L-seryl-[protein] + ADP + H(+). The catalysed reaction is L-threonyl-[protein] + ATP = O-phospho-L-threonyl-[protein] + ADP + H(+). Activated by tyrosine and threonine phosphorylation. Its function is as follows. Mitogen-activated protein kinase required for growth on media where sorbitol or mannitol is the sole carbon source. This is Mitogen-activated protein kinase mpkC (mpkC) from Aspergillus clavatus (strain ATCC 1007 / CBS 513.65 / DSM 816 / NCTC 3887 / NRRL 1 / QM 1276 / 107).